Consider the following 348-residue polypeptide: Protein RecA (348 aa).

71-78 (GVESSGKT) contacts ATP.

It belongs to the RecA family.

It localises to the cytoplasm. Its function is as follows. Can catalyze the hydrolysis of ATP in the presence of single-stranded DNA, the ATP-dependent uptake of single-stranded DNA by duplex DNA, and the ATP-dependent hybridization of homologous single-stranded DNAs. It interacts with LexA causing its activation and leading to its autocatalytic cleavage. This Aquifex pyrophilus protein is Protein RecA.